The chain runs to 220 residues: Deoxyribose-phosphate aldolase (220 aa).

Asp89 acts as the Proton donor/acceptor in catalysis. The active-site Schiff-base intermediate with acetaldehyde is Lys151. The Proton donor/acceptor role is filled by Lys180.

This sequence belongs to the DeoC/FbaB aldolase family. DeoC type 1 subfamily.

The protein resides in the cytoplasm. The catalysed reaction is 2-deoxy-D-ribose 5-phosphate = D-glyceraldehyde 3-phosphate + acetaldehyde. The protein operates within carbohydrate degradation; 2-deoxy-D-ribose 1-phosphate degradation; D-glyceraldehyde 3-phosphate and acetaldehyde from 2-deoxy-alpha-D-ribose 1-phosphate: step 2/2. Catalyzes a reversible aldol reaction between acetaldehyde and D-glyceraldehyde 3-phosphate to generate 2-deoxy-D-ribose 5-phosphate. The sequence is that of Deoxyribose-phosphate aldolase from Streptococcus gordonii (strain Challis / ATCC 35105 / BCRC 15272 / CH1 / DL1 / V288).